Here is a 242-residue protein sequence, read N- to C-terminus: NAD(P)H-quinone oxidoreductase subunit K (242 aa).

4 residues coordinate [4Fe-4S] cluster: Cys59, Cys60, Cys124, and Cys155.

Belongs to the complex I 20 kDa subunit family. NDH-1 can be composed of about 15 different subunits; different subcomplexes with different compositions have been identified which probably have different functions. [4Fe-4S] cluster is required as a cofactor.

It is found in the cellular thylakoid membrane. The catalysed reaction is a plastoquinone + NADH + (n+1) H(+)(in) = a plastoquinol + NAD(+) + n H(+)(out). The enzyme catalyses a plastoquinone + NADPH + (n+1) H(+)(in) = a plastoquinol + NADP(+) + n H(+)(out). NDH-1 shuttles electrons from an unknown electron donor, via FMN and iron-sulfur (Fe-S) centers, to quinones in the respiratory and/or the photosynthetic chain. The immediate electron acceptor for the enzyme in this species is believed to be plastoquinone. Couples the redox reaction to proton translocation, and thus conserves the redox energy in a proton gradient. Cyanobacterial NDH-1 also plays a role in inorganic carbon-concentration. The protein is NAD(P)H-quinone oxidoreductase subunit K of Synechococcus sp. (strain RCC307).